The following is a 255-amino-acid chain: Indole-3-glycerol phosphate synthase (255 aa).

It belongs to the TrpC family.

The enzyme catalyses 1-(2-carboxyphenylamino)-1-deoxy-D-ribulose 5-phosphate + H(+) = (1S,2R)-1-C-(indol-3-yl)glycerol 3-phosphate + CO2 + H2O. It participates in amino-acid biosynthesis; L-tryptophan biosynthesis; L-tryptophan from chorismate: step 4/5. This is Indole-3-glycerol phosphate synthase from Streptococcus pneumoniae serotype 2 (strain D39 / NCTC 7466).